Reading from the N-terminus, the 299-residue chain is Large ribosomal subunit protein eL22 (299 aa).

Disordered regions lie at residues 1-142 (MAPT…AAPA) and 155-178 (VAKPAPKPKAKAAPAPSKVVKKNV). Composition is skewed to basic and acidic residues over residues 33–42 (GKVEKPKAEA) and 55–64 (KASEAAKDVK). 2 stretches are compositionally biased toward low complexity: residues 65-98 (AAAAAAKPAAAKPAAAKPAAASKDAGKKAPAAAA) and 105-142 (AAAAPAPAKAAPAKKAASTPAAAPPAKKAAPAKAAAPA).

The protein belongs to the eukaryotic ribosomal protein eL22 family.

The polypeptide is Large ribosomal subunit protein eL22 (RpL22) (Drosophila melanogaster (Fruit fly)).